The sequence spans 566 residues: Chaperone Ric-8 (566 aa).

The protein belongs to the synembryn family. In terms of assembly, interacts with GDP-bound G(i)-alpha protein. Does not interact with G-alpha proteins when they are in complex with subunits beta and gamma. Interacts with Frq2 in a Ca(2+)-independent manner but does not interact with Frq1.

It is found in the cytoplasm. The protein localises to the cell cortex. It localises to the presynapse. Its function is as follows. Chaperone that specifically binds and folds some, but not all, nascent G alpha proteins prior to G protein heterotrimer formation, promoting their stability and activity. Also acts as a guanine nucleotide exchange factor (GEF) for G alpha proteins by stimulating exchange of bound GDP for free GTP. Plays a key role in asymmetric spindle positioning, a step for asymmetric cell division that generates cell diversity during development by activating G(i) alpha protein independently of G-protein coupled receptors. Required during gastrulation and sensory organ precursor (SOP) formation. Plays a role in positively regulating synapse number and neurotransmitter release. The chain is Chaperone Ric-8 (ric8a) from Drosophila pseudoobscura pseudoobscura (Fruit fly).